The primary structure comprises 215 residues: Protein HP-25 homolog 2 (215 aa).

An N-terminal signal peptide occupies residues 1–30 (MPGRGGQSLSMVCVDVWILALSVLSVMADA). The disordered stretch occupies residues 35–79 (VTESCDSQGPPGLPGPPGLPGPPGPPGPPGPPGLRGPTGIPGDIE). The region spanning 43–76 (GPPGLPGPPGLPGPPGPPGPPGPPGLRGPTGIPG) is the Collagen-like domain. Positions 45-68 (PGLPGPPGLPGPPGPPGPPGPPGL) are enriched in pro residues. Positions 82–215 (LSPPKSAFAV…GYLLYGNYPG (134 aa)) constitute a C1q domain.

It is found in the secreted. The polypeptide is Protein HP-25 homolog 2 (Bos taurus (Bovine)).